Here is a 243-residue protein sequence, read N- to C-terminus: Triosephosphate isomerase (243 aa).

9 to 11 contacts substrate; the sequence is NWK. The active-site Electrophile is His96. Glu165 (proton acceptor) is an active-site residue. Substrate-binding positions include Gly171, Ser204, and 225–226; that span reads GG.

It belongs to the triosephosphate isomerase family. Homodimer.

It localises to the cytoplasm. It catalyses the reaction D-glyceraldehyde 3-phosphate = dihydroxyacetone phosphate. It participates in carbohydrate biosynthesis; gluconeogenesis. It functions in the pathway carbohydrate degradation; glycolysis; D-glyceraldehyde 3-phosphate from glycerone phosphate: step 1/1. In terms of biological role, involved in the gluconeogenesis. Catalyzes stereospecifically the conversion of dihydroxyacetone phosphate (DHAP) to D-glyceraldehyde-3-phosphate (G3P). The sequence is that of Triosephosphate isomerase from Synechococcus sp. (strain CC9902).